The following is a 113-amino-acid chain: Major basic nuclear protein 1 (113 aa).

The segment at 1 to 20 (MAPKMKAAMKAMKAPAMKGK) is disordered.

The protein localises to the nucleus. The polypeptide is Major basic nuclear protein 1 (HCc1) (Crypthecodinium cohnii (Dinoflagellate)).